A 76-amino-acid polypeptide reads, in one-letter code: Acyl carrier protein (76 aa).

Positions 1 to 74 constitute a Carrier domain; that stretch reads MFDKLKEIIA…DVVEYITEHT (74 aa). Ser34 carries the O-(pantetheine 4'-phosphoryl)serine modification.

This sequence belongs to the acyl carrier protein (ACP) family. 4'-phosphopantetheine is transferred from CoA to a specific serine of apo-ACP by AcpS. This modification is essential for activity because fatty acids are bound in thioester linkage to the sulfhydryl of the prosthetic group.

Its subcellular location is the cytoplasm. The protein operates within lipid metabolism; fatty acid biosynthesis. Functionally, carrier of the growing fatty acid chain in fatty acid biosynthesis. This chain is Acyl carrier protein, found in Clostridium perfringens (strain ATCC 13124 / DSM 756 / JCM 1290 / NCIMB 6125 / NCTC 8237 / Type A).